The primary structure comprises 101 residues: Small ribosomal subunit protein uS14 (101 aa).

It belongs to the universal ribosomal protein uS14 family. Part of the 30S ribosomal subunit. Contacts proteins S3 and S10.

Binds 16S rRNA, required for the assembly of 30S particles and may also be responsible for determining the conformation of the 16S rRNA at the A site. This chain is Small ribosomal subunit protein uS14, found in Neisseria meningitidis serogroup C / serotype 2a (strain ATCC 700532 / DSM 15464 / FAM18).